Here is a 1399-residue protein sequence, read N- to C-terminus: DNA-directed RNA polymerase subunit beta' (1399 aa).

4 residues coordinate Zn(2+): C71, C73, C86, and C89. Residues D462, D464, and D466 each coordinate Mg(2+). C810, C884, C891, and C894 together coordinate Zn(2+). Residues 1379 to 1399 form a disordered region; that stretch reads KQAAIVPSQPEPQPLALPPAE. Over residues 1387–1399 the composition is skewed to pro residues; the sequence is QPEPQPLALPPAE.

The protein belongs to the RNA polymerase beta' chain family. In terms of assembly, the RNAP catalytic core consists of 2 alpha, 1 beta, 1 beta' and 1 omega subunit. When a sigma factor is associated with the core the holoenzyme is formed, which can initiate transcription. Mg(2+) is required as a cofactor. It depends on Zn(2+) as a cofactor.

It catalyses the reaction RNA(n) + a ribonucleoside 5'-triphosphate = RNA(n+1) + diphosphate. DNA-dependent RNA polymerase catalyzes the transcription of DNA into RNA using the four ribonucleoside triphosphates as substrates. This chain is DNA-directed RNA polymerase subunit beta', found in Bradyrhizobium sp. (strain BTAi1 / ATCC BAA-1182).